The primary structure comprises 1728 residues: Protein NETWORKED 1A (1728 aa).

The NAB domain occupies 13-92; sequence YSWWWDSHIP…ERYDHATVEL (80 aa). Coiled-coil stretches lie at residues 155 to 446, 476 to 827, 857 to 885, 954 to 1016, 1090 to 1323, 1403 to 1431, and 1576 to 1684; these read LGNS…LEIE, MLRD…QVEI, FSEKLIAELESENLEQQMEAEFLVHEIDN, QFQS…AELQ, EQAE…KETV, LLQDMKTRIKTIKQAVAEEKKRRGKLRRR, and RRLA…TKSK. A disordered region spans residues 1419–1441; sequence AEEKKRRGKLRRRSSSHRSKDRK. Residues 1424–1439 are compositionally biased toward basic residues; it reads RRGKLRRRSSSHRSKD.

The protein belongs to the NET family. Interacts with F-actin. As to expression, expressed in root meristems and at very low levels throughout mature vasculature.

The protein resides in the cytoplasm. It localises to the cytoskeleton. The protein localises to the cell membrane. Its subcellular location is the cell junction. It is found in the plasmodesma. Plant-specific actin binding protein. Associates with F-actin at the plasma membrane and plasmodesmata. May be part of a membrane-cytoskeletal adapter complex. This is Protein NETWORKED 1A from Arabidopsis thaliana (Mouse-ear cress).